A 312-amino-acid chain; its full sequence is Pyridoxal kinase (312 aa).

M1 is modified (N-acetylmethionine). S12 and T47 together coordinate pyridoxal. T47 lines the pyridoxal 5'-phosphate pocket. S59 is modified (phosphoserine). D113 is a binding site for ATP. Position 113 (D113) interacts with Na(+). D118 serves as a coordination point for Mg(2+). A Na(+)-binding site is contributed by T148. 150 to 153 (NQFE) is an ATP binding site. Position 164 is a phosphoserine (S164). T186 is a Na(+) binding site. 186–187 (TS) lines the ATP pocket. S213 bears the Phosphoserine mark. ATP contacts are provided by residues 226–228 (VDP) and T233. 234–235 (GD) serves as a coordination point for pyridoxal 5'-phosphate. D235 (proton acceptor) is an active-site residue. A Phosphoserine modification is found at S285.

Belongs to the pyridoxine kinase family. In terms of assembly, homodimer. Zn(2+) serves as cofactor. The cofactor is Mg(2+).

The protein localises to the cytoplasm. Its subcellular location is the cytosol. The enzyme catalyses pyridoxal + ATP = pyridoxal 5'-phosphate + ADP + H(+). The catalysed reaction is pyridoxamine + ATP = pyridoxamine 5'-phosphate + ADP + H(+). It catalyses the reaction pyridoxine + ATP = pyridoxine 5'-phosphate + ADP + H(+). It participates in cofactor metabolism; pyridoxal 5'-phosphate salvage; pyridoxal 5'-phosphate from pyridoxal: step 1/1. The protein operates within cofactor metabolism; pyridoxal 5'-phosphate salvage; pyridoxine 5'-phosphate from pyridoxine: step 1/1. Its pathway is cofactor metabolism; pyridoxal 5'-phosphate salvage; pyridoxamine 5'-phosphate from pyridoxamine: step 1/1. Activity is increased in the presence of K(+)or Na(+). Its function is as follows. Catalyzes the phosphorylation of the dietary vitamin B6 vitamers pyridoxal (PL), pyridoxine (PN) and pyridoxamine (PM) to form pyridoxal 5'-phosphate (PLP), pyridoxine 5'-phosphate (PNP) and pyridoxamine 5'-phosphate (PMP), respectively. PLP is the active form of vitamin B6, and acts as a cofactor for over 140 different enzymatic reactions. This is Pyridoxal kinase (Pdxk) from Rattus norvegicus (Rat).